The sequence spans 349 residues: MAQSRDTGNPFPDSGELDNPFQDPAVIQHRPSQQYATLDVYNPFENREPPPAYEPPAPAPAPLPPPSAPSVQSSRKLSPTEPRNYGSYSTQASAAAATAELLKKQEELNRKAEELDRRERELQHVALGGAGTRQNNWPPLPSFCPVKPCFFQDISMEIPQEFQKTVSTMYYLWMCSTLALLLNFFACLARFCVDTGSGSGFGLSMLWLLLFTPCSFVCWYRPMYKAFRSDSSFNFFVFFFIFFVQDVFFVLQAIGIPGWGFSGWVTALVVVGSKPAVAVLMLLVALLFTGIAVLGIVMLKRIHSLYRQTGASFQKAQQEFAAGVFSNPAVRTAAANAAAGAAENAFRAP.

Positions 1–90 (MAQSRDTGNP…EPRNYGSYST (90 aa)) are disordered. At 1 to 168 (MAQSRDTGNP…PQEFQKTVST (168 aa)) the chain is on the cytoplasmic side. Phosphoserine is present on S32. T37 carries the phosphothreonine modification. A phosphotyrosine mark is found at Y41 and Y53. Pro residues predominate over residues 49–68 (PPPAYEPPAPAPAPLPPPSA). Phosphoserine occurs at positions 74 and 78. Y85 carries the post-translational modification Phosphotyrosine. S87 is subject to Phosphoserine. The next 4 membrane-spanning stretches (helical) occupy residues 169–189 (MYYLWMCSTLALLLNFFACLA), 200–220 (GFGLSMLWLLLFTPCSFVCWY), 236–256 (FVFFFIFFVQDVFFVLQAIGI), and 277–297 (VAVLMLLVALLFTGIAVLGIV). The Cytoplasmic portion of the chain corresponds to 298–349 (MLKRIHSLYRQTGASFQKAQQEFAAGVFSNPAVRTAAANAAAGAAENAFRAP). K315 participates in a covalent cross-link: Glycyl lysine isopeptide (Lys-Gly) (interchain with G-Cter in SUMO1).

Belongs to the SCAMP family. Interacts with NEDD4 and NEDD4L and TSG101. Interacts with RNF126. Monoubiquitinated.

It is found in the membrane. Its function is as follows. Functions in post-Golgi recycling pathways. Acts as a recycling carrier to the cell surface. This Mus musculus (Mouse) protein is Secretory carrier-associated membrane protein 3 (Scamp3).